Reading from the N-terminus, the 187-residue chain is MLSSLSPYMANPRNTLSQVLNFGLVLSSAFMVWKALSVITNSASPVVVVLSGSMEPAFQRGDLLFLWNRSPRVDVGEIVVYNVQGKDIPIVHRVMRVFPDVPTTGAKDVEGVEASQKLLTKGDNNLSDDTELYAPGQEFLDRKTDLMGSVRGYVPAIGYVTIMLSEHPWLKSVLLGFMGLMVMLQRE.

The Cytoplasmic portion of the chain corresponds to M1–Q18. Residues V19–I39 form a helical; Signal-anchor for type II membrane protein membrane-spanning segment. At T40 to E187 the chain is on the lumenal side. Catalysis depends on charge relay system residues S53 and H92. N125 carries N-linked (GlcNAc...) asparagine glycosylation. The active-site Charge relay system is the D129. The interval V173–L184 is C-terminal short (CTS) helix.

It belongs to the peptidase S26B family. In terms of assembly, component of the signal peptidase complex (SPC) composed of a catalytic subunit SEC11 and three accessory subunits SPC1, SPC2 and SPC3. The complex induces a local thinning of the ER membrane which is used to measure the length of the signal peptide (SP) h-region of protein substrates. This ensures the selectivity of the complex towards h-regions shorter than 18-20 amino acids. SPC associates with the translocon complex.

It is found in the endoplasmic reticulum membrane. It carries out the reaction Cleavage of hydrophobic, N-terminal signal or leader sequences from secreted and periplasmic proteins.. Functionally, catalytic component of the signal peptidase complex (SPC) which catalyzes the cleavage of N-terminal signal sequences from nascent proteins as they are translocated into the lumen of the endoplasmic reticulum. Specifically cleaves N-terminal signal peptides that contain a hydrophobic alpha-helix (h-region) shorter than 18-20 amino acids. The sequence is that of Signal peptidase complex catalytic subunit SEC11 (SEC11) from Ajellomyces capsulatus (strain NAm1 / WU24) (Darling's disease fungus).